Consider the following 202-residue polypeptide: uncharacterized protein (202 aa).

Residues 175-195 traverse the membrane as a helical segment; the sequence is INTGIALFIILTSLLVYFIQF.

It localises to the membrane. This is an uncharacterized protein from Dictyostelium discoideum (Social amoeba).